Here is a 1043-residue protein sequence, read N- to C-terminus: Sucrose-phosphate synthase 1 (1043 aa).

The span at 95 to 117 shows a compositional bias: basic and acidic residues; sequence EEKEAQRLAKRRLEREKGRREAT. Residues 95–127 form a disordered region; the sequence is EEKEAQRLAKRRLEREKGRREATADMSEEFSEG. Phosphoserine occurs at positions 121, 125, 152, and 155. Residues 670–693 are disordered; that stretch reads PRHPQWQSDDGGDNSEPESPSDSL.

It belongs to the glycosyltransferase 1 family. Homodimer or homotetramer. In terms of processing, phosphorylated at Ser-152 upon sucrose supply. Expressed in seeds, stems, rosette leaves, flowers and siliques. Highly expressed in maturing nectaries.

It catalyses the reaction beta-D-fructose 6-phosphate + UDP-alpha-D-glucose = sucrose 6(F)-phosphate + UDP + H(+). It functions in the pathway glycan biosynthesis; sucrose biosynthesis; sucrose from D-fructose 6-phosphate and UDP-alpha-D-glucose: step 1/2. Its activity is regulated as follows. Activity is regulated by phosphorylation and moderated by concentration of metabolites and light. Plays a major role in photosynthetic sucrose synthesis by catalyzing the rate-limiting step of sucrose biosynthesis from UDP-glucose and fructose- 6-phosphate. Involved in the regulation of carbon partitioning in the leaves of plants. May regulate the synthesis of sucrose and therefore play a major role as a limiting factor in the export of photoassimilates out of the leaf. Plays a role for sucrose availability that is essential for plant growth and fiber elongation. Required for nectar secretion. The sequence is that of Sucrose-phosphate synthase 1 (SPS1) from Arabidopsis thaliana (Mouse-ear cress).